The chain runs to 395 residues: Xylose isomerase (395 aa).

Residues His-54 and Asp-57 contribute to the active site. Mg(2+) contacts are provided by Glu-181, Glu-217, His-220, Asp-245, Asp-255, Asp-257, and Asp-293.

This sequence belongs to the xylose isomerase family. As to quaternary structure, homotetramer. The cofactor is Mg(2+).

The protein localises to the cytoplasm. It catalyses the reaction alpha-D-xylose = alpha-D-xylulofuranose. The polypeptide is Xylose isomerase (Pseudarthrobacter chlorophenolicus (strain ATCC 700700 / DSM 12829 / CIP 107037 / JCM 12360 / KCTC 9906 / NCIMB 13794 / A6) (Arthrobacter chlorophenolicus)).